The primary structure comprises 284 residues: Probable 3-mercaptopyruvate sulfurtransferase (284 aa).

2 consecutive Rhodanese domains span residues 17 to 138 and 168 to 281; these read SEPD…ALTN and GQPG…RPVA. Arg182 serves as a coordination point for substrate. The active-site Cysteine persulfide intermediate is the Cys241. Residues 241–247 are substrate specificity; sequence CGSGVTA.

It is found in the cytoplasm. The enzyme catalyses 2-oxo-3-sulfanylpropanoate + [thioredoxin]-dithiol = [thioredoxin]-disulfide + hydrogen sulfide + pyruvate + H(+). In terms of biological role, catalyzes the transfer of sulfur from 3-mercaptopyruvate to a thiol-containing acceptor to form an intramolecular disulfide releasing hydrogen sulfide and pyruvate. The chain is Probable 3-mercaptopyruvate sulfurtransferase (sseA) from Pseudomonas aeruginosa (strain ATCC 15692 / DSM 22644 / CIP 104116 / JCM 14847 / LMG 12228 / 1C / PRS 101 / PAO1).